The primary structure comprises 805 residues: Chloride channel protein (805 aa).

At 1-48 (MSHEKNEASGYPEAQSWKSQEAMLGARTEVSRWRAVKNCLYRHLVKVL) the chain is on the cytoplasmic side. 2 helical membrane-spanning segments follow: residues 49–86 (GEDW…LFAL) and 93–116 (LQYL…CQIV). The short motif at 122–126 (GSGIP) is the Selectivity filter part_1 element. Ser-123 contacts chloride. An intramembrane region (helical) is located at residues 125–132 (IPELKTII). The next 2 helical transmembrane spans lie at 141–159 (LTLR…ALSA) and 166–184 (EGPF…NQLL). Residues 164–168 (GKEGP) carry the Selectivity filter part_2 motif. Intramembrane regions (helical) lie at residues 201–213 (ILTV…ISCC) and 217–225 (PLAGVLFSI). Transmembrane regions (helical) follow at residues 237 to 256 (YWRG…VLSV), 283 to 311 (MPAF…IVFM), and 320 to 339 (ILKK…LATL). The N-linked (GlcNAc...) asparagine glycan is linked to Asn-365. The next 2 membrane-spanning stretches (helical) occupy residues 388-408 (LNIF…AALA) and 416-439 (GAFV…MALL). A Selectivity filter part_3 motif is present at residues 416–420 (GAFVP). Phe-418 lines the chloride pocket. The segment at residues 456 to 470 (GEYAVIGAAAMTGAV) is an intramembrane region (helical). The note=Loop between two helices intramembrane region spans 471–472 (TH). An intramembrane region (helical) is located at residues 473–484 (AVSTAVICFELT). The note=Loop between two helices intramembrane region spans 485 to 489 (GQISH). The helical transmembrane segment at 490–507 (VLPMMVAVILANMVAQGL) threads the bilayer. The Cytoplasmic segment spans residues 508–805 (QPSLYDSIIQ…RTATSNSSGK (298 aa)). Tyr-512 contacts chloride. In terms of domain architecture, CBS 1 spans 543–601 (MVRDVTSIASTSTYGDLLHVLRQTKLKFFPFVDTPDTNTLLGSIDRTEVEGLLQRRISA). Disordered regions lie at residues 606 to 625 (PAAA…GASF) and 653 to 684 (KVQT…QKGT). One can recognise a CBS 2 domain in the interval 719 to 776 (IDQSPFQLVEGTSLQKTHTLFSLLGLDRAYVTSMGKLVGVVALAEIQAAIEGSYQKGF).

This sequence belongs to the chloride channel (TC 2.A.49) family. ClC-0 subfamily. As to quaternary structure, homodimer. Each subunit contains a channel ('Double barreled channel').

Its subcellular location is the membrane. Its function is as follows. Voltage-gated chloride channel. This channel is thought to ensure the high conductance of the non-innervated membrane of the electrocyte necessary for efficient current generation caused by sodium influx through the acetylcholine receptor at the innervated membrane. This chain is Chloride channel protein, found in Torpedo marmorata (Marbled electric ray).